The primary structure comprises 281 residues: Shikimate dehydrogenase (NADP(+)) (281 aa).

Shikimate contacts are provided by residues 15–17 (SKS) and threonine 62. Lysine 66 serves as the catalytic Proton acceptor. Shikimate contacts are provided by asparagine 87 and aspartate 102. NADP(+)-binding positions include 127-131 (GAGGS), 151-156 (NRTPER), and leucine 217. Tyrosine 219 contributes to the shikimate binding site. Residue glycine 241 coordinates NADP(+).

It belongs to the shikimate dehydrogenase family. As to quaternary structure, homodimer.

It carries out the reaction shikimate + NADP(+) = 3-dehydroshikimate + NADPH + H(+). Its pathway is metabolic intermediate biosynthesis; chorismate biosynthesis; chorismate from D-erythrose 4-phosphate and phosphoenolpyruvate: step 4/7. In terms of biological role, involved in the biosynthesis of the chorismate, which leads to the biosynthesis of aromatic amino acids. Catalyzes the reversible NADPH linked reduction of 3-dehydroshikimate (DHSA) to yield shikimate (SA). This Stenotrophomonas maltophilia (strain K279a) protein is Shikimate dehydrogenase (NADP(+)).